The sequence spans 168 residues: Transcriptional regulator MraZ (168 aa).

2 consecutive SpoVT-AbrB domains span residues 8 to 51 and 90 to 140; these read EYNQ…GGDR and ALNM…KADI.

Belongs to the MraZ family. As to quaternary structure, forms oligomers.

The protein localises to the cytoplasm. It localises to the nucleoid. This Cereibacter sphaeroides (strain KD131 / KCTC 12085) (Rhodobacter sphaeroides) protein is Transcriptional regulator MraZ.